Here is an 804-residue protein sequence, read N- to C-terminus: Ribonucleoside-diphosphate reductase large subunit (804 aa).

The 92-residue stretch at 1–92 (MYVLNRKGEE…TDNLHKNTSD (92 aa)) folds into the ATP-cone domain. Residues 5–6 (NR), 11–17 (EDISFDQ), threonine 53, and aspartate 57 each bind ATP. Serine 216 contacts GDP. Cysteines 217 and 442 form a disulfide. Residues 225–227 (DSI), lysine 242, arginine 255, and 262–263 (RG) contribute to the dTTP site. Residue asparagine 425 participates in GDP binding. Asparagine 425 (proton acceptor) is an active-site residue. The active-site Cysteine radical intermediate is the cysteine 427. Residues glutamate 429 and 603 to 606 (TAST) contribute to the GDP site. Glutamate 429 acts as the Proton acceptor in catalysis.

This sequence belongs to the ribonucleoside diphosphate reductase large chain family. As to quaternary structure, heterodimer of a large and a small subunit.

The enzyme catalyses a 2'-deoxyribonucleoside 5'-diphosphate + [thioredoxin]-disulfide + H2O = a ribonucleoside 5'-diphosphate + [thioredoxin]-dithiol. Its activity is regulated as follows. Under complex allosteric control mediated by deoxynucleoside triphosphates and ATP binding to separate specificity and activation sites on the large subunit. The type of nucleotide bound at the specificity site determines substrate preference. It seems probable that ATP makes the enzyme reduce CDP and UDP, dGTP favors ADP reduction and dTTP favors GDP reduction. Stimulated by ATP and inhibited by dATP binding to the activity site. Provides the precursors necessary for DNA synthesis. Catalyzes the biosynthesis of deoxyribonucleotides from the corresponding ribonucleotides. The protein is Ribonucleoside-diphosphate reductase large subunit (RNR1) of Plasmodium falciparum (isolate FCR-3 / Gambia).